Consider the following 460-residue polypeptide: Serine--tRNA ligase (460 aa).

Residues 50–65 (DRNEVSSKIGELKQAG) show a composition bias toward basic and acidic residues. Disordered regions lie at residues 50 to 71 (DRNE…DAAQ) and 109 to 129 (PDED…RREG). The segment covering 109–121 (PDEDAPVGDSEAE) has biased composition (acidic residues). 241 to 243 (TAE) lines the L-serine pocket. ATP is bound by residues 272–274 (RRE) and V288. E295 provides a ligand contact to L-serine. An ATP-binding site is contributed by 368 to 371 (EVSS). S404 is a binding site for L-serine.

Belongs to the class-II aminoacyl-tRNA synthetase family. Type-1 seryl-tRNA synthetase subfamily. Homodimer. The tRNA molecule binds across the dimer.

The protein resides in the cytoplasm. The catalysed reaction is tRNA(Ser) + L-serine + ATP = L-seryl-tRNA(Ser) + AMP + diphosphate + H(+). It carries out the reaction tRNA(Sec) + L-serine + ATP = L-seryl-tRNA(Sec) + AMP + diphosphate + H(+). It participates in aminoacyl-tRNA biosynthesis; selenocysteinyl-tRNA(Sec) biosynthesis; L-seryl-tRNA(Sec) from L-serine and tRNA(Sec): step 1/1. In terms of biological role, catalyzes the attachment of serine to tRNA(Ser). Is also able to aminoacylate tRNA(Sec) with serine, to form the misacylated tRNA L-seryl-tRNA(Sec), which will be further converted into selenocysteinyl-tRNA(Sec). This Halobacterium salinarum (strain ATCC 29341 / DSM 671 / R1) protein is Serine--tRNA ligase.